Consider the following 757-residue polypeptide: POU domain, class 2, transcription factor 1 (757 aa).

4 disordered regions span residues 1-43 (MKLH…QTNG), 271-295 (AATP…SLEE), 375-398 (SLSN…RRKK), and 532-574 (VSSV…TSPL). Polar residues-rich tracts occupy residues 19 to 43 (RMNN…QTNG) and 275 to 285 (VQQLPQSQTTP). Positions 294–368 (EEPSDLEELE…LLEKWLNDAE (75 aa)) constitute a POU-specific domain. The segment at residues 395–454 (RRKKRTSIETNIRVALEKSFLENQKPTSEEITMIADQLNMEKEVIRVWFCNRRQKEKRIN) is a DNA-binding region (homeobox).

It belongs to the POU transcription factor family. Class-2 subfamily.

It is found in the cytoplasm. Its subcellular location is the nucleus. In terms of biological role, transcription factor that binds to the octamer motif (5'-ATTTGCAT-3') and activates the promoters of the genes for some small nuclear RNAs (snRNA) and histone H2B. Acts downstream of Notch signaling during radial glia formation. Regulates apoptosis, possibly via an FGF-signaling pathway. The polypeptide is POU domain, class 2, transcription factor 1 (Xenopus tropicalis (Western clawed frog)).